The primary structure comprises 394 residues: Maltose permease (394 aa).

Over 1-11 the chain is Cytoplasmic; the sequence is MGAAFKWGAAA. The helical transmembrane segment at 12-38 threads the bilayer; that stretch reads RKTVFPLFYFLIFFAFGALFPLLSVYL. The Extracellular segment spans residues 39–45; that stretch reads QEEARLS. The helical transmembrane segment at 46-74 threads the bilayer; it reads GAAIGWIMSLPPIVTMAAQPLWGTAADYT. Residues 75-78 are Cytoplasmic-facing; the sequence is RKPV. Residues 79–104 form a helical membrane-spanning segment; that stretch reads GLLLAALVLAALFGVMYALAGSYRLF. Topologically, residues 105–108 are extracellular; it reads VVLT. A helical membrane pass occupies residues 109–126; the sequence is VLLSAMQSAIVPLSDSLA. The Cytoplasmic portion of the chain corresponds to 127–137; sequence LRHVHEQGGNY. Residues 138 to 160 form a helical membrane-spanning segment; the sequence is GAIRLWGSLGFAMAVLAVGWLSD. Residues 161-163 lie on the Extracellular side of the membrane; that stretch reads HIA. Residues 164 to 183 traverse the membrane as a helical segment; that stretch reads FAVIFYAFSLALLTAAALAT. Residues 184–213 lie on the Cytoplasmic side of the membrane; sequence RLPRYPMGAPGALTRQDVRGLLASRPFRLL. A helical transmembrane segment spans residues 214–233; sequence LVATFLLFGPILANNSYFGL. Residues 234–237 lie on the Extracellular side of the membrane; the sequence is LIHE. The chain crosses the membrane as a helical span at residues 238-262; the sequence is LGGTLTGIGLAFLFAAGSEAPFMKA. The Cytoplasmic portion of the chain corresponds to 263–272; that stretch reads ADRLIGRFGM. A helical transmembrane segment spans residues 273–292; it reads VRLLLLAALISAARWLAYAA. The Extracellular portion of the chain corresponds to 293–295; sequence DPP. The helical transmembrane segment at 296–318 threads the bilayer; the sequence is LWFVYMTTVVQGCSVGLAIPTAL. Residues 319-330 are Cytoplasmic-facing; the sequence is QYARRLAPERVQ. A helical transmembrane segment spans residues 331-358; sequence STAVALYSAVGNGLGAWFCTLVGGYLLE. The Extracellular portion of the chain corresponds to 359–361; the sequence is RWQ. The helical transmembrane segment at 362 to 382 threads the bilayer; it reads IGAVYLFFSICTIVGVLVLLL. The Cytoplasmic portion of the chain corresponds to 383 to 394; it reads LAKRERTAGEEK.

This sequence belongs to the major facilitator superfamily.

It localises to the cell membrane. Functionally, high affinity transport of maltose. The chain is Maltose permease (malA) from Geobacillus stearothermophilus (Bacillus stearothermophilus).